The sequence spans 616 residues: Dihydroxy-acid dehydratase (616 aa).

Aspartate 81 contributes to the Mg(2+) binding site. A [2Fe-2S] cluster-binding site is contributed by cysteine 122. 2 residues coordinate Mg(2+): aspartate 123 and lysine 124. Position 124 is an N6-carboxylysine (lysine 124). Position 195 (cysteine 195) interacts with [2Fe-2S] cluster. Glutamate 491 lines the Mg(2+) pocket. The Proton acceptor role is filled by serine 517.

The protein belongs to the IlvD/Edd family. Homodimer. It depends on [2Fe-2S] cluster as a cofactor. The cofactor is Mg(2+).

It carries out the reaction (2R)-2,3-dihydroxy-3-methylbutanoate = 3-methyl-2-oxobutanoate + H2O. It catalyses the reaction (2R,3R)-2,3-dihydroxy-3-methylpentanoate = (S)-3-methyl-2-oxopentanoate + H2O. It functions in the pathway amino-acid biosynthesis; L-isoleucine biosynthesis; L-isoleucine from 2-oxobutanoate: step 3/4. Its pathway is amino-acid biosynthesis; L-valine biosynthesis; L-valine from pyruvate: step 3/4. Functions in the biosynthesis of branched-chain amino acids. Catalyzes the dehydration of (2R,3R)-2,3-dihydroxy-3-methylpentanoate (2,3-dihydroxy-3-methylvalerate) into 2-oxo-3-methylpentanoate (2-oxo-3-methylvalerate) and of (2R)-2,3-dihydroxy-3-methylbutanoate (2,3-dihydroxyisovalerate) into 2-oxo-3-methylbutanoate (2-oxoisovalerate), the penultimate precursor to L-isoleucine and L-valine, respectively. This is Dihydroxy-acid dehydratase from Shigella boydii serotype 4 (strain Sb227).